We begin with the raw amino-acid sequence, 128 residues long: AECSVDIQGNDQMQFSTNAITVDKACKTFTVNLSHPGSLPKNVMGHNWVLTTAADMQGVVTDGMAAGLDKNYVKDGDTRVIAHTKIIGSGEKDSVTFDVSKLKAGDAYAFFCSFPGHSAMMKGTLTLK.

The region spanning 1–128 is the Plastocyanin-like domain; the sequence is AECSVDIQGN…AMMKGTLTLK (128 aa). Cu cation contacts are provided by H46, C112, H117, and M121.

The protein localises to the periplasm. In terms of biological role, transfers electrons from cytochrome c551 to cytochrome oxidase. This chain is Azurin, found in Pseudomonas denitrificans.